The chain runs to 516 residues: Replication factor C large subunit (516 aa).

ATP is bound at residue 44–51; that stretch reads GAPGVGKT. The disordered stretch occupies residues 421–516; it reads RSEAVEAHAG…DGQAGLSEFM (96 aa). Residues 454–467 show a composition bias toward basic and acidic residues; that stretch reads VQSHKSAESGDDTV. Low complexity predominate over residues 479–496; it reads QSGASETASATESASDSD. Residues 497–508 are compositionally biased toward acidic residues; that stretch reads ASTDTDADDDDG.

It belongs to the activator 1 small subunits family. RfcL subfamily. As to quaternary structure, heteromultimer composed of small subunits (RfcS) and large subunits (RfcL).

Its function is as follows. Part of the RFC clamp loader complex which loads the PCNA sliding clamp onto DNA. This Haloquadratum walsbyi (strain DSM 16790 / HBSQ001) protein is Replication factor C large subunit.